The following is a 139-amino-acid chain: D-ribose pyranase (139 aa).

His20 (proton donor) is an active-site residue. Substrate is bound by residues Asp28, His106, and 128–130 (YAN).

The protein belongs to the RbsD / FucU family. RbsD subfamily. In terms of assembly, homodecamer.

It is found in the cytoplasm. The catalysed reaction is beta-D-ribopyranose = beta-D-ribofuranose. Its pathway is carbohydrate metabolism; D-ribose degradation; D-ribose 5-phosphate from beta-D-ribopyranose: step 1/2. Its function is as follows. Catalyzes the interconversion of beta-pyran and beta-furan forms of D-ribose. The protein is D-ribose pyranase of Histophilus somni (strain 129Pt) (Haemophilus somnus).